Consider the following 335-residue polypeptide: Glycerol-3-phosphate dehydrogenase [NAD(P)+] (335 aa).

4 residues coordinate NADPH: S10, F11, R31, and K105. Sn-glycerol 3-phosphate is bound by residues K105, G136, and S138. A140 is a binding site for NADPH. K191, D244, S254, R255, and N256 together coordinate sn-glycerol 3-phosphate. The Proton acceptor role is filled by K191. R255 is a binding site for NADPH. Residues V279 and E281 each contribute to the NADPH site.

It belongs to the NAD-dependent glycerol-3-phosphate dehydrogenase family.

It is found in the cytoplasm. The catalysed reaction is sn-glycerol 3-phosphate + NAD(+) = dihydroxyacetone phosphate + NADH + H(+). It catalyses the reaction sn-glycerol 3-phosphate + NADP(+) = dihydroxyacetone phosphate + NADPH + H(+). It functions in the pathway membrane lipid metabolism; glycerophospholipid metabolism. Functionally, catalyzes the reduction of the glycolytic intermediate dihydroxyacetone phosphate (DHAP) to sn-glycerol 3-phosphate (G3P), the key precursor for phospholipid synthesis. The sequence is that of Glycerol-3-phosphate dehydrogenase [NAD(P)+] from Leptospira borgpetersenii serovar Hardjo-bovis (strain JB197).